The sequence spans 538 residues: Atos homolog protein B (538 aa).

3 disordered regions span residues 1-99 (MRHV…PSTV), 165-185 (QGGQ…QLHT), and 199-270 (KSPV…GTLG). Pro residues predominate over residues 227 to 238 (HTPPGPGPPGPC). Phosphoserine is present on residues serine 254 and serine 255. Residues 348 to 430 (LLGNFEESLL…VPKVGTIQVT (83 aa)) are required for macropage invasion. Residues 436 to 444 (QTVVKMFLV) are transactivation domain 1 (TAD1).

Belongs to the ATOS family.

It is found in the nucleus. In terms of biological role, transcription regulator that syncronizes transcriptional and translational programs to promote macrophage invasion of tissues. This is Atos homolog protein B from Mus musculus (Mouse).